Consider the following 1312-residue polypeptide: uncharacterized protein (1312 aa).

Positions 1–20 are cleaved as a signal peptide; the sequence is MRNNLIYTMFLSCLHFETFC. Low complexity predominate over residues 299–344; the sequence is TTTSSSTMLSSTTLLTTETETRESSSTGSTQTTTPSTEPSTTITTP. 8 disordered regions span residues 299-503, 565-609, 645-692, 749-775, 812-864, 899-942, 1048-1079, and 1114-1165; these read TTTS…TTTY, EITS…PTGG, KETR…PTGG, SSSSKFSITPTPTPSSGTTTYNWPTGG, KTRT…GGTT, KTRT…PTGG, KTRTETTSDAQGCKATSTTQTPTTFNWPTGGT, and NTTR…TLET. A compositionally biased stretch (polar residues) spans 345–357; sequence MEQSSTVSSVQKT. The span at 365-503 shows a compositional bias: low complexity; that stretch reads SSSTTVPTSA…STPATPTTTY (139 aa). Basic and acidic residues predominate over residues 565–574; it reads EITSDAEGCK. Residues 576-609 are compositionally biased toward low complexity; sequence TSSTPTPSSTSVHSTTATPSTTPGTTTYNWPTGG. Positions 645-659 are enriched in basic and acidic residues; it reads KETRTETTTDADGCK. The segment covering 660 to 692 has biased composition (low complexity); it reads KTSSTSSSTPSLKHSTTPTPTPGTTTYNWPTGG. A compositionally biased stretch (basic and acidic residues) spans 813-825; sequence TRTETTTDAEGCK. Low complexity predominate over residues 826–864; the sequence is KTSSTSKISTTPTSPTSSKPTPTSTSMTTTYNWPTGGTT. Positions 899–908 are enriched in polar residues; that stretch reads KTRTETTTDA. The segment covering 914 to 942 has biased composition (low complexity); that stretch reads TSSTSLKPTSPSSSTASPPTTTYNWPTGG. Polar residues predominate over residues 1048-1057; it reads KTRTETTSDA. The span at 1063-1076 shows a compositional bias: low complexity; the sequence is TSTTQTPTTFNWPT. A compositionally biased stretch (polar residues) spans 1114-1123; that stretch reads NTTRTETTSD. A compositionally biased stretch (low complexity) spans 1130-1154; it reads TSSGTTSTMSPGTTGGTTVSRTTNS. Residues 1155–1164 show a composition bias toward polar residues; the sequence is NNPIDSSTLE. A Sushi domain is found at 1239-1306; it reads ATCSSLNLNL…WSGTPEKCVA (68 aa). Cystine bridges form between Cys1241–Cys1291 and Cys1273–Cys1304.

The protein resides in the secreted. This is an uncharacterized protein from Caenorhabditis elegans.